The chain runs to 113 residues: Tachykinin-4 (113 aa).

The signal sequence occupies residues 1-20 (MLPCLALLLLMELSVCTVAG). The residue at position 67 (Met67) is a Methionine amide. The propeptide occupies 71 to 79 (VGGRPLIQP). The residue at position 95 (Leu95) is a Leucine amide. The propeptide occupies 98-113 (RSLFTEGREDEAQGSE).

This sequence belongs to the tachykinin family. Expressed at low levels in the uterus of both pregnant and non-pregnant women. Isoform 1 is found only in the adrenal gland and fetal liver. Isoform 2 is found in heart, liver, bone marrow, prostate, adrenal gland and testis. Isoform 3 and isoform 4 are expressed predominantly in adrenal gland and placenta.

The protein resides in the secreted. Tachykinins are active peptides which excite neurons, evoke behavioral responses, are potent vasodilators and secretagogues, and contract (directly or indirectly) many smooth muscles. Endokinin-A induces thermal hyperalgesia and pain-related behavior such as scratching following intrathecal administration in rats. These effects are suppressed by treatment with endokinin-C. Endokinin-A/B reduces arterial blood pressure and increases sperm motility. The polypeptide is Tachykinin-4 (Homo sapiens (Human)).